We begin with the raw amino-acid sequence, 244 residues long: Phosphoadenosine 5'-phosphosulfate reductase (244 aa).

The active-site Nucleophile; cysteine thiosulfonate intermediate is the Cys-239.

It belongs to the PAPS reductase family. CysH subfamily.

The protein localises to the cytoplasm. The enzyme catalyses [thioredoxin]-disulfide + sulfite + adenosine 3',5'-bisphosphate + 2 H(+) = [thioredoxin]-dithiol + 3'-phosphoadenylyl sulfate. It functions in the pathway sulfur metabolism; hydrogen sulfide biosynthesis; sulfite from sulfate: step 3/3. In terms of biological role, catalyzes the formation of sulfite from phosphoadenosine 5'-phosphosulfate (PAPS) using thioredoxin as an electron donor. This Salmonella arizonae (strain ATCC BAA-731 / CDC346-86 / RSK2980) protein is Phosphoadenosine 5'-phosphosulfate reductase.